A 324-amino-acid chain; its full sequence is Fe-S cluster assembly protein dre2 (324 aa).

Positions 28–158 are N-terminal SAM-like domain; sequence GSPSKRTLLL…KMDQPKSFAI (131 aa). The segment at 159–217 is linker; the sequence is PLRRNGKKKDAAKTETFAPAPAPAPPVQPVTVGMINNDDDYENDDDLIDEDTLLSDEDL. Positions 226, 237, 240, and 242 each coordinate [2Fe-2S] cluster. Positions 226 to 242 are fe-S binding site A; the sequence is CQPKPGRRRRACKDCTC. Cysteine 287, cysteine 290, cysteine 298, and cysteine 301 together coordinate [4Fe-4S] cluster. Short sequence motifs (cx2C motif) lie at residues 287–290 and 298–301; these read CGNC and CAGC. Residues 287-301 are fe-S binding site B; the sequence is CGNCALGDAFRCAGC.

It belongs to the anamorsin family. As to quaternary structure, monomer. Interacts with tah18. Interacts with mia40. It depends on [2Fe-2S] cluster as a cofactor. [4Fe-4S] cluster serves as cofactor.

It is found in the cytoplasm. The protein localises to the mitochondrion intermembrane space. Component of the cytosolic iron-sulfur (Fe-S) protein assembly (CIA) machinery required for the maturation of extramitochondrial Fe-S proteins. Part of an electron transfer chain functioning in an early step of cytosolic Fe-S biogenesis, facilitating the de novo assembly of a [4Fe-4S] cluster on the scaffold complex cfd1-nbp35. Electrons are transferred to dre2 from NADPH via the FAD- and FMN-containing protein tah18. Tah18-dre2 are also required for the assembly of the diferric tyrosyl radical cofactor of ribonucleotide reductase (RNR), probably by providing electrons for reduction during radical cofactor maturation in the catalytic small subunit rnr2. The chain is Fe-S cluster assembly protein dre2 from Aspergillus niger (strain ATCC MYA-4892 / CBS 513.88 / FGSC A1513).